Consider the following 338-residue polypeptide: 4-hydroxy-3-methylbut-2-enyl diphosphate reductase (338 aa).

Cys-21 lines the [4Fe-4S] cluster pocket. Positions 50 and 83 each coordinate (2E)-4-hydroxy-3-methylbut-2-enyl diphosphate. His-50 and His-83 together coordinate dimethylallyl diphosphate. Residues His-50 and His-83 each coordinate isopentenyl diphosphate. Position 105 (Cys-105) interacts with [4Fe-4S] cluster. A (2E)-4-hydroxy-3-methylbut-2-enyl diphosphate-binding site is contributed by His-133. Residue His-133 coordinates dimethylallyl diphosphate. His-133 is an isopentenyl diphosphate binding site. Residue Glu-135 is the Proton donor of the active site. A (2E)-4-hydroxy-3-methylbut-2-enyl diphosphate-binding site is contributed by Thr-173. Residue Cys-203 coordinates [4Fe-4S] cluster. (2E)-4-hydroxy-3-methylbut-2-enyl diphosphate is bound by residues Ser-231, Ser-232, Asn-233, and Ser-276. Residues Ser-231, Ser-232, Asn-233, and Ser-276 each contribute to the dimethylallyl diphosphate site. Isopentenyl diphosphate-binding residues include Ser-231, Ser-232, Asn-233, and Ser-276.

Belongs to the IspH family. The cofactor is [4Fe-4S] cluster.

It carries out the reaction isopentenyl diphosphate + 2 oxidized [2Fe-2S]-[ferredoxin] + H2O = (2E)-4-hydroxy-3-methylbut-2-enyl diphosphate + 2 reduced [2Fe-2S]-[ferredoxin] + 2 H(+). It catalyses the reaction dimethylallyl diphosphate + 2 oxidized [2Fe-2S]-[ferredoxin] + H2O = (2E)-4-hydroxy-3-methylbut-2-enyl diphosphate + 2 reduced [2Fe-2S]-[ferredoxin] + 2 H(+). Its pathway is isoprenoid biosynthesis; dimethylallyl diphosphate biosynthesis; dimethylallyl diphosphate from (2E)-4-hydroxy-3-methylbutenyl diphosphate: step 1/1. It participates in isoprenoid biosynthesis; isopentenyl diphosphate biosynthesis via DXP pathway; isopentenyl diphosphate from 1-deoxy-D-xylulose 5-phosphate: step 6/6. Catalyzes the conversion of 1-hydroxy-2-methyl-2-(E)-butenyl 4-diphosphate (HMBPP) into a mixture of isopentenyl diphosphate (IPP) and dimethylallyl diphosphate (DMAPP). Acts in the terminal step of the DOXP/MEP pathway for isoprenoid precursor biosynthesis. This Streptomyces coelicolor (strain ATCC BAA-471 / A3(2) / M145) protein is 4-hydroxy-3-methylbut-2-enyl diphosphate reductase.